Here is a 120-residue protein sequence, read N- to C-terminus: Large ribosomal subunit protein uL18 (120 aa).

This sequence belongs to the universal ribosomal protein uL18 family. Part of the 50S ribosomal subunit; part of the 5S rRNA/L5/L18/L25 subcomplex. Contacts the 5S and 23S rRNAs.

This is one of the proteins that bind and probably mediate the attachment of the 5S RNA into the large ribosomal subunit, where it forms part of the central protuberance. This is Large ribosomal subunit protein uL18 from Halalkalibacterium halodurans (strain ATCC BAA-125 / DSM 18197 / FERM 7344 / JCM 9153 / C-125) (Bacillus halodurans).